The following is a 312-amino-acid chain: tRNA dimethylallyltransferase (312 aa).

Residue Gly10 to Thr17 participates in ATP binding. Thr12–Thr17 serves as a coordination point for substrate. The segment at Asp35–Gln38 is interaction with substrate tRNA.

This sequence belongs to the IPP transferase family. In terms of assembly, monomer. Mg(2+) serves as cofactor.

It catalyses the reaction adenosine(37) in tRNA + dimethylallyl diphosphate = N(6)-dimethylallyladenosine(37) in tRNA + diphosphate. In terms of biological role, catalyzes the transfer of a dimethylallyl group onto the adenine at position 37 in tRNAs that read codons beginning with uridine, leading to the formation of N6-(dimethylallyl)adenosine (i(6)A). The chain is tRNA dimethylallyltransferase from Alkaliphilus metalliredigens (strain QYMF).